A 537-amino-acid polypeptide reads, in one-letter code: ATP synthase subunit alpha (537 aa).

Residue 174–181 (GDRQTGKT) participates in ATP binding.

The protein belongs to the ATPase alpha/beta chains family. F-type ATPases have 2 components, CF(1) - the catalytic core - and CF(0) - the membrane proton channel. CF(1) has five subunits: alpha(3), beta(3), gamma(1), delta(1), epsilon(1). CF(0) has three main subunits: a(1), b(2) and c(9-12). The alpha and beta chains form an alternating ring which encloses part of the gamma chain. CF(1) is attached to CF(0) by a central stalk formed by the gamma and epsilon chains, while a peripheral stalk is formed by the delta and b chains.

The protein localises to the cell inner membrane. The enzyme catalyses ATP + H2O + 4 H(+)(in) = ADP + phosphate + 5 H(+)(out). Produces ATP from ADP in the presence of a proton gradient across the membrane. The alpha chain is a regulatory subunit. The polypeptide is ATP synthase subunit alpha (Verminephrobacter eiseniae (strain EF01-2)).